The primary structure comprises 163 residues: Putative 4-hydroxy-4-methyl-2-oxoglutarate aldolase (163 aa).

Substrate is bound by residues 76 to 79 and Arg-98; that span reads GDML. Residue Asp-99 participates in a divalent metal cation binding.

It belongs to the class II aldolase/RraA-like family. As to quaternary structure, homotrimer. It depends on a divalent metal cation as a cofactor.

It catalyses the reaction 4-hydroxy-4-methyl-2-oxoglutarate = 2 pyruvate. The catalysed reaction is oxaloacetate + H(+) = pyruvate + CO2. Its function is as follows. Catalyzes the aldol cleavage of 4-hydroxy-4-methyl-2-oxoglutarate (HMG) into 2 molecules of pyruvate. Also contains a secondary oxaloacetate (OAA) decarboxylase activity due to the common pyruvate enolate transition state formed following C-C bond cleavage in the retro-aldol and decarboxylation reactions. This is Putative 4-hydroxy-4-methyl-2-oxoglutarate aldolase from Pseudomonas putida (strain ATCC 47054 / DSM 6125 / CFBP 8728 / NCIMB 11950 / KT2440).